A 354-amino-acid polypeptide reads, in one-letter code: Glycerol-3-phosphate dehydrogenase [NAD(P)+] (354 aa).

4 residues coordinate NADPH: S27, F28, R48, and K121. 2 residues coordinate sn-glycerol 3-phosphate: K121 and G149. Residue A153 coordinates NADPH. Residues K204, D257, S267, R268, and N269 each contribute to the sn-glycerol 3-phosphate site. K204 serves as the catalytic Proton acceptor. NADPH is bound at residue R268. NADPH contacts are provided by V292 and E294.

This sequence belongs to the NAD-dependent glycerol-3-phosphate dehydrogenase family.

The protein localises to the cytoplasm. It carries out the reaction sn-glycerol 3-phosphate + NAD(+) = dihydroxyacetone phosphate + NADH + H(+). It catalyses the reaction sn-glycerol 3-phosphate + NADP(+) = dihydroxyacetone phosphate + NADPH + H(+). Its pathway is membrane lipid metabolism; glycerophospholipid metabolism. Its function is as follows. Catalyzes the reduction of the glycolytic intermediate dihydroxyacetone phosphate (DHAP) to sn-glycerol 3-phosphate (G3P), the key precursor for phospholipid synthesis. The protein is Glycerol-3-phosphate dehydrogenase [NAD(P)+] of Pseudomonas fluorescens (strain Pf0-1).